A 623-amino-acid chain; its full sequence is Membrane protein insertase YidC (623 aa).

Helical transmembrane passes span Leu-8–Pro-28, Met-379–Tyr-399, Leu-449–Ile-469, Thr-507–Leu-527, and Ile-543–Val-563. Residues Lys-601–Pro-617 are compositionally biased toward low complexity. Residues Lys-601–Pro-623 form a disordered region.

It belongs to the OXA1/ALB3/YidC family. Type 1 subfamily. In terms of assembly, interacts with the Sec translocase complex via SecD. Specifically interacts with transmembrane segments of nascent integral membrane proteins during membrane integration.

The protein localises to the cell inner membrane. In terms of biological role, required for the insertion and/or proper folding and/or complex formation of integral membrane proteins into the membrane. Involved in integration of membrane proteins that insert both dependently and independently of the Sec translocase complex, as well as at least some lipoproteins. Aids folding of multispanning membrane proteins. This chain is Membrane protein insertase YidC, found in Cereibacter sphaeroides (strain ATCC 17023 / DSM 158 / JCM 6121 / CCUG 31486 / LMG 2827 / NBRC 12203 / NCIMB 8253 / ATH 2.4.1.) (Rhodobacter sphaeroides).